The sequence spans 247 residues: Adenosylcobinamide-GDP ribazoletransferase (247 aa).

Helical transmembrane passes span 34–54, 59–79, 113–133, 138–158, and 194–214; these read IITFPLIGLLLGAISGLVFMV, CGAPLAALFSVLVLVLMTGGF, GGLALIFVVLAKILVLSELAL, ILASLAAACAVSRGTAALLMY, and VLLPGMHGVAAMVVTMVAIFI.

This sequence belongs to the CobS family. Mg(2+) is required as a cofactor.

Its subcellular location is the cell inner membrane. It catalyses the reaction alpha-ribazole + adenosylcob(III)inamide-GDP = adenosylcob(III)alamin + GMP + H(+). It carries out the reaction alpha-ribazole 5'-phosphate + adenosylcob(III)inamide-GDP = adenosylcob(III)alamin 5'-phosphate + GMP + H(+). It functions in the pathway cofactor biosynthesis; adenosylcobalamin biosynthesis; adenosylcobalamin from cob(II)yrinate a,c-diamide: step 7/7. Its function is as follows. Joins adenosylcobinamide-GDP and alpha-ribazole to generate adenosylcobalamin (Ado-cobalamin). Also synthesizes adenosylcobalamin 5'-phosphate from adenosylcobinamide-GDP and alpha-ribazole 5'-phosphate. In Escherichia coli O157:H7, this protein is Adenosylcobinamide-GDP ribazoletransferase.